We begin with the raw amino-acid sequence, 246 residues long: Alpha-tubulin N-acetyltransferase (246 aa).

The region spanning 21–202 (LTLVPDGVSR…NNFVVFHSFF (182 aa)) is the N-acetyltransferase domain. Residues 135 to 148 (FYVD…GYGK) and 172 to 181 (SNKLLGFLRK) contribute to the acetyl-CoA site.

Belongs to the acetyltransferase ATAT1 family.

The catalysed reaction is L-lysyl-[alpha-tubulin] + acetyl-CoA = N(6)-acetyl-L-lysyl-[alpha-tubulin] + CoA + H(+). Functionally, specifically acetylates 'Lys-40' in alpha-tubulin on the lumenal side of microtubules. Promotes microtubule destabilization and accelerates microtubule dynamics; this activity may be independent of acetylation activity. Acetylates alpha-tubulin with a slow enzymatic rate, due to a catalytic site that is not optimized for acetyl transfer. Enters the microtubule through each end and diffuses quickly throughout the lumen of microtubules. Acetylates only long/old microtubules because of its slow acetylation rate since it does not have time to act on dynamically unstable microtubules before the enzyme is released. This chain is Alpha-tubulin N-acetyltransferase, found in Leishmania major.